Here is a 404-residue protein sequence, read N- to C-terminus: L-cysteine:1D-myo-inositol 2-amino-2-deoxy-alpha-D-glucopyranoside ligase (404 aa).

The tract at residues Met1–Pro20 is disordered. Position 45 (Cys45) interacts with Zn(2+). L-cysteinyl-5'-AMP is bound by residues Cys45–Thr48, Thr60, and Asn83–Thr85. The short motif at Ile47–His57 is the 'HIGH' region element. The 'ERGGDP' region motif lies at Glu185–Pro190. Residues Glu185–Gly216 are disordered. Residues Arg186–Leu199 are compositionally biased toward basic and acidic residues. L-cysteinyl-5'-AMP is bound at residue Trp226. Zn(2+) is bound at residue Cys230. Gly248–Asp250 lines the L-cysteinyl-5'-AMP pocket. Position 255 (His255) interacts with Zn(2+). Leu280 lines the L-cysteinyl-5'-AMP pocket. The short motif at Lys286–Ser290 is the 'KMSKS' region element.

This sequence belongs to the class-I aminoacyl-tRNA synthetase family. MshC subfamily. In terms of assembly, monomer. The cofactor is Zn(2+).

The enzyme catalyses 1D-myo-inositol 2-amino-2-deoxy-alpha-D-glucopyranoside + L-cysteine + ATP = 1D-myo-inositol 2-(L-cysteinylamino)-2-deoxy-alpha-D-glucopyranoside + AMP + diphosphate + H(+). Functionally, catalyzes the ATP-dependent condensation of GlcN-Ins and L-cysteine to form L-Cys-GlcN-Ins. The protein is L-cysteine:1D-myo-inositol 2-amino-2-deoxy-alpha-D-glucopyranoside ligase of Xylanimonas cellulosilytica (strain DSM 15894 / JCM 12276 / CECT 5975 / KCTC 9989 / LMG 20990 / NBRC 107835 / XIL07).